The primary structure comprises 520 residues: FNIP repeat-containing protein DDB_G0274063/DDB_G0272642 (520 aa).

Disordered stretches follow at residues 47–86 (QQQSNNNNNNNNNNNNNNNNNNFINFSNHTNNINNNIDNR) and 100–121 (NISSSSPYTLTSTPSSSSSSSS). The span at 51–84 (NNNNNNNNNNNNNNNNNNFINFSNHTNNINNNID) shows a compositional bias: low complexity. FNIP repeat units follow at residues 242-285 (YNNN…FGES), 286-331 (FNQD…FGLS), 332-406 (YNQP…FGVQ), and 453-496 (FNQQ…FHNS).

The polypeptide is FNIP repeat-containing protein DDB_G0274063/DDB_G0272642 (Dictyostelium discoideum (Social amoeba)).